Consider the following 89-residue polypeptide: Small ribosomal subunit protein uS15 (89 aa).

The segment covering 1-21 (MSVDAETKTKIIKDNARDKND) has biased composition (basic and acidic residues). Residues 1–26 (MSVDAETKTKIIKDNARDKNDTGSPE) form a disordered region.

Belongs to the universal ribosomal protein uS15 family. As to quaternary structure, part of the 30S ribosomal subunit. Forms a bridge to the 50S subunit in the 70S ribosome, contacting the 23S rRNA.

In terms of biological role, one of the primary rRNA binding proteins, it binds directly to 16S rRNA where it helps nucleate assembly of the platform of the 30S subunit by binding and bridging several RNA helices of the 16S rRNA. Its function is as follows. Forms an intersubunit bridge (bridge B4) with the 23S rRNA of the 50S subunit in the ribosome. In Erythrobacter litoralis (strain HTCC2594), this protein is Small ribosomal subunit protein uS15.